The primary structure comprises 219 residues: Vacuolar protein sorting-associated protein 32 homolog 2 (219 aa).

2 coiled-coil regions span residues 10-41 and 117-176; these read KQEA…KKAG and TNID…QLLQ. Residues 168–219 are disordered; the sequence is EELESQLLQPATTAPPLPSVPVPAGRQPARPVPQKRTAEEEELAALQAEMAL.

The protein belongs to the SNF7 family. Component of the endosomal sorting required for transport complex III (ESCRT-III), composed at least of VPS2, VPS20, VPS24 and VPS32. Interacts with SKD1. Interacts with BRO1/ALIX.

The protein resides in the endosome. In terms of biological role, component of the ESCRT-III complex, which is required for multivesicular bodies (MVBs) formation and sorting of endosomal cargo proteins into MVBs. The ESCRT-III complex is probably involved in the concentration of MVB cargo. This Arabidopsis thaliana (Mouse-ear cress) protein is Vacuolar protein sorting-associated protein 32 homolog 2 (VPS32.2).